We begin with the raw amino-acid sequence, 151 residues long: Hemoglobin-2 (151 aa).

T2 is modified (N-acetylthreonine). Residues 3–148 (TLTNPQKAAI…ICKTLGDYMK (146 aa)) enclose the Globin domain. H97 serves as a coordination point for heme b.

Belongs to the globin family. As to quaternary structure, homotetramer.

It localises to the cytoplasm. This Phacoides pectinatus (Thick lucine) protein is Hemoglobin-2.